We begin with the raw amino-acid sequence, 474 residues long: Cysteine--tRNA ligase (474 aa).

C29 lines the Zn(2+) pocket. Positions 31–41 match the 'HIGH' region motif; that stretch reads ATVQGEPHVGH. Zn(2+) contacts are provided by C211, H236, and E240. The 'KMSKS' region signature appears at 267–271; sequence KMSKS. Residue K270 participates in ATP binding.

It belongs to the class-I aminoacyl-tRNA synthetase family. In terms of assembly, monomer. Requires Zn(2+) as cofactor.

Its subcellular location is the cytoplasm. The catalysed reaction is tRNA(Cys) + L-cysteine + ATP = L-cysteinyl-tRNA(Cys) + AMP + diphosphate. This chain is Cysteine--tRNA ligase, found in Beutenbergia cavernae (strain ATCC BAA-8 / DSM 12333 / CCUG 43141 / JCM 11478 / NBRC 16432 / NCIMB 13614 / HKI 0122).